The sequence spans 116 residues: HTH-type transcriptional regulator AnsR (116 aa).

Positions 6 to 60 constitute an HTH cro/C1-type domain; it reads LTELRKKKNWSLQYTADLLGIAKSTYAGYESGYRRPSLEALAMLADLFDTTCDEL. The H-T-H motif DNA-binding region spans 17 to 36; that stretch reads LQYTADLLGIAKSTYAGYES.

Its function is as follows. Transcriptional repressor for the ans operon coding for L-asparaginase and L-aspartase. NH4(+) may influence this repression. The chain is HTH-type transcriptional regulator AnsR (ansR) from Bacillus subtilis (strain 168).